Consider the following 417-residue polypeptide: UDP-N-acetylglucosamine 1-carboxyvinyltransferase (417 aa).

22 to 23 serves as a coordination point for phosphoenolpyruvate; that stretch reads KN. Arginine 91 contacts UDP-N-acetyl-alpha-D-glucosamine. Cysteine 115 (proton donor) is an active-site residue. At cysteine 115 the chain carries 2-(S-cysteinyl)pyruvic acid O-phosphothioketal. UDP-N-acetyl-alpha-D-glucosamine contacts are provided by residues 120–124, aspartate 304, and isoleucine 326; that span reads RPVDL.

It belongs to the EPSP synthase family. MurA subfamily.

Its subcellular location is the cytoplasm. It carries out the reaction phosphoenolpyruvate + UDP-N-acetyl-alpha-D-glucosamine = UDP-N-acetyl-3-O-(1-carboxyvinyl)-alpha-D-glucosamine + phosphate. The protein operates within cell wall biogenesis; peptidoglycan biosynthesis. Cell wall formation. Adds enolpyruvyl to UDP-N-acetylglucosamine. The protein is UDP-N-acetylglucosamine 1-carboxyvinyltransferase of Nitratidesulfovibrio vulgaris (strain DSM 19637 / Miyazaki F) (Desulfovibrio vulgaris).